The sequence spans 696 residues: SEC14 domain and spectrin repeat-containing protein 1 (696 aa).

A CRAL-TRIO domain is found at 1–153 (MEASVILPIL…DFGGSLTYDH (153 aa)). Spectrin repeat units lie at residues 275–378 (EEIQ…NLLQ), 381–494 (LEFH…LKML), and 500–602 (FKCE…HRLE).

This sequence belongs to the SOLO family. In terms of assembly, interacts (via the spectrin 1 repeat) with TRPC4 and TRPC5 (via CIRB domain). Interacts with CTNNB1.

Functionally, may act as the primary docking protein directing membrane turnover and assembly of the transient receptor potential channels TRPC4 and TRPC5. Binds phospholipids such as phosphatidylinositol monophosphates, phosphatidylinositol diphosphates (PIP2s) and phosphatidic acid, but not less polar lipids including phosphatidylcholine, phosphatidylserine, and phosphatidylinositol. The binding to PIP2s is calcium dependent. Might be involved in the plasma membrane localization of CTNNB1. This Mus musculus (Mouse) protein is SEC14 domain and spectrin repeat-containing protein 1 (Sestd1).